Consider the following 342-residue polypeptide: Eukaryotic translation initiation factor 3 subunit F (342 aa).

The MPN domain maps to 30 to 166; sequence VAIQPQAVFS…SRTYISAPIG (137 aa). The tract at residues 310–342 is disordered; the sequence is TDALAGDGQKDGGDRKQGGDRRNKGRQQRTQEA. Basic and acidic residues predominate over residues 317 to 331; that stretch reads GQKDGGDRKQGGDRR.

It belongs to the eIF-3 subunit F family. As to quaternary structure, component of the eukaryotic translation initiation factor 3 (eIF-3) complex.

The protein resides in the cytoplasm. Its function is as follows. Component of the eukaryotic translation initiation factor 3 (eIF-3) complex, which is involved in protein synthesis of a specialized repertoire of mRNAs and, together with other initiation factors, stimulates binding of mRNA and methionyl-tRNAi to the 40S ribosome. The eIF-3 complex specifically targets and initiates translation of a subset of mRNAs involved in cell proliferation. This is Eukaryotic translation initiation factor 3 subunit F from Phaeosphaeria nodorum (strain SN15 / ATCC MYA-4574 / FGSC 10173) (Glume blotch fungus).